The primary structure comprises 188 residues: Elongation factor P (188 aa).

The protein belongs to the elongation factor P family.

The protein localises to the cytoplasm. It functions in the pathway protein biosynthesis; polypeptide chain elongation. Functionally, involved in peptide bond synthesis. Stimulates efficient translation and peptide-bond synthesis on native or reconstituted 70S ribosomes in vitro. Probably functions indirectly by altering the affinity of the ribosome for aminoacyl-tRNA, thus increasing their reactivity as acceptors for peptidyl transferase. This is Elongation factor P from Cereibacter sphaeroides (strain KD131 / KCTC 12085) (Rhodobacter sphaeroides).